The primary structure comprises 236 residues: Purine nucleoside phosphorylase DeoD-type 2 (236 aa).

H5 contacts a purine D-ribonucleoside. Residues G21, R25, R44, and 88–91 contribute to the phosphate site; that span reads RIGS. A purine D-ribonucleoside-binding positions include 180 to 182 and 204 to 205; these read DME and SD. Catalysis depends on D205, which acts as the Proton donor.

It belongs to the PNP/UDP phosphorylase family. Homohexamer; trimer of homodimers.

The enzyme catalyses a purine D-ribonucleoside + phosphate = a purine nucleobase + alpha-D-ribose 1-phosphate. It catalyses the reaction a purine 2'-deoxy-D-ribonucleoside + phosphate = a purine nucleobase + 2-deoxy-alpha-D-ribose 1-phosphate. Its function is as follows. Catalyzes the reversible phosphorolytic breakdown of the N-glycosidic bond in the beta-(deoxy)ribonucleoside molecules, with the formation of the corresponding free purine bases and pentose-1-phosphate. This Vibrio cholerae serotype O1 (strain ATCC 39315 / El Tor Inaba N16961) protein is Purine nucleoside phosphorylase DeoD-type 2.